Consider the following 141-residue polypeptide: MTIDINAIREALPHRYPMLLVDRVLEVSEDEITAIKNVTINEPFFNGHFPQYPVMPGVLIMEALAQTAGVLELSKPENKGKLVFYAGMDKVKFKKQVVPGDQLVMTAKFVKRRGTIAVVEAKAEVDGKLAASGTLTFAIGS.

The active site involves His48.

It belongs to the thioester dehydratase family. FabZ subfamily.

The protein localises to the cytoplasm. It catalyses the reaction a (3R)-hydroxyacyl-[ACP] = a (2E)-enoyl-[ACP] + H2O. Functionally, involved in unsaturated fatty acids biosynthesis. Catalyzes the dehydration of short chain beta-hydroxyacyl-ACPs and long chain saturated and unsaturated beta-hydroxyacyl-ACPs. The protein is 3-hydroxyacyl-[acyl-carrier-protein] dehydratase FabZ of Streptococcus thermophilus (strain CNRZ 1066).